The chain runs to 222 residues: Superoxide dismutase [Mn], mitochondrial (222 aa).

A mitochondrion-targeting transit peptide spans 1 to 24 (MLCRAACSTSRKLVPALGSLGSRQ). His50 is a Mn(2+) binding site. Tyr58 bears the 3'-nitrotyrosine mark. Lys68 and Lys75 each carry N6-acetyllysine; alternate. Residues Lys68 and Lys75 each carry the N6-succinyllysine; alternate modification. His98 lines the Mn(2+) pocket. The residue at position 114 (Lys114) is an N6-acetyllysine. Lys122 and Lys130 each carry N6-acetyllysine; alternate. N6-succinyllysine; alternate is present on residues Lys122 and Lys130. Residues Asp183 and His187 each contribute to the Mn(2+) site. The residue at position 202 (Lys202) is an N6-acetyllysine.

This sequence belongs to the iron/manganese superoxide dismutase family. As to quaternary structure, homotetramer. Mn(2+) is required as a cofactor. Post-translationally, nitrated under oxidative stress. Nitration coupled with oxidation inhibits the catalytic activity. In terms of processing, acetylation at Lys-122 decreases enzymatic activity. Deacetylated by SIRT3 upon exposure to ionizing radiations or after long fasting. Polyubiquitinated; leading to proteasomal degradation. Deubiquitinated by USP36 which increases protein stability.

Its subcellular location is the mitochondrion matrix. It catalyses the reaction 2 superoxide + 2 H(+) = H2O2 + O2. Its function is as follows. Destroys superoxide anion radicals which are normally produced within the cells and which are toxic to biological systems. The protein is Superoxide dismutase [Mn], mitochondrial (SOD2) of Equus caballus (Horse).